Consider the following 447-residue polypeptide: Argininosuccinate lyase (447 aa).

This sequence belongs to the lyase 1 family. Argininosuccinate lyase subfamily.

The protein localises to the cytoplasm. The catalysed reaction is 2-(N(omega)-L-arginino)succinate = fumarate + L-arginine. It participates in amino-acid biosynthesis; L-arginine biosynthesis; L-arginine from L-ornithine and carbamoyl phosphate: step 3/3. This Bacteroides fragilis (strain ATCC 25285 / DSM 2151 / CCUG 4856 / JCM 11019 / LMG 10263 / NCTC 9343 / Onslow / VPI 2553 / EN-2) protein is Argininosuccinate lyase.